A 280-amino-acid polypeptide reads, in one-letter code: UPF0328 protein ECU06_0020/ECU06_1700 (280 aa).

It belongs to the UPF0328 family.

This Encephalitozoon cuniculi (strain GB-M1) (Microsporidian parasite) protein is UPF0328 protein ECU06_0020/ECU06_1700.